A 444-amino-acid chain; its full sequence is Phosphoglucosamine mutase (444 aa).

The active-site Phosphoserine intermediate is Ser100. Residues Ser100, Asp240, Asp242, and Asp244 each contribute to the Mg(2+) site. Ser100 carries the post-translational modification Phosphoserine.

This sequence belongs to the phosphohexose mutase family. The cofactor is Mg(2+). Post-translationally, activated by phosphorylation.

It catalyses the reaction alpha-D-glucosamine 1-phosphate = D-glucosamine 6-phosphate. Its function is as follows. Catalyzes the conversion of glucosamine-6-phosphate to glucosamine-1-phosphate. The protein is Phosphoglucosamine mutase of Moorella thermoacetica (strain ATCC 39073 / JCM 9320).